The sequence spans 250 residues: Carboxy-S-adenosyl-L-methionine synthase (250 aa).

Residues tyrosine 45, 70–72 (GCS), 95–96 (DN), 123–124 (DI), asparagine 138, and arginine 205 contribute to the S-adenosyl-L-methionine site.

Belongs to the class I-like SAM-binding methyltransferase superfamily. Cx-SAM synthase family. As to quaternary structure, homodimer.

The catalysed reaction is prephenate + S-adenosyl-L-methionine = carboxy-S-adenosyl-L-methionine + 3-phenylpyruvate + H2O. In terms of biological role, catalyzes the conversion of S-adenosyl-L-methionine (SAM) to carboxy-S-adenosyl-L-methionine (Cx-SAM). The protein is Carboxy-S-adenosyl-L-methionine synthase of Marinobacter nauticus (strain ATCC 700491 / DSM 11845 / VT8) (Marinobacter aquaeolei).